We begin with the raw amino-acid sequence, 504 residues long: Patatin-like phospholipase domain-containing protein 2 (504 aa).

At 1-8 (MFPREKTW) the chain is on the cytoplasmic side. A helical membrane pass occupies residues 9 to 29 (NISFAGCGFLGVYYVGVASCL). The PNPLA domain maps to 10–179 (ISFAGCGFLG…SDNLPLYELK (170 aa)). Positions 14 to 19 (GCGFLG) match the GXGXXG motif. The Extracellular segment spans residues 30 to 42 (REHAPFLVANATH). Asn-39 carries N-linked (GlcNAc...) asparagine glycosylation. A helical membrane pass occupies residues 43–63 (IYGASAGALTATALVTGVCLG). The short motif at 45–49 (GASAG) is the GXSXG element. Ser-47 (nucleophile) is an active-site residue. The Cytoplasmic segment spans residues 64–137 (EAGAKFIEVS…IISHFNSKDE (74 aa)). Residue Lys-92 forms a Glycyl lysine isopeptide (Lys-Gly) (interchain with G-Cter in ubiquitin) linkage. Residues 138-158 (LIQANVCSGFIPVYCGLIPPS) form a helical membrane-spanning segment. Residues 159-329 (LQGVRYVDGG…TTLSNMLPVR (171 aa)) are Extracellular-facing. The Proton acceptor role is filled by Asp-166. A DGA/G motif is present at residues 166–168 (DGG). Residues 330-350 (LATAMMVPYTLPLESALSFTI) traverse the membrane as a helical segment. Topologically, residues 351 to 504 (RLLEWLPDVP…ARPVIGALGL (154 aa)) are cytoplasmic. Position 372 is a phosphoserine; in vitro (Ser-372). Phosphoserine; by PKA and FAM20C is present on Ser-404. Position 428 is a phosphoserine (Ser-428). The tract at residues 463–492 (APADPAPAPADPASPQHQLAGPAPLLSTPA) is disordered.

As to quaternary structure, interacts with ABHD5; this association stimulates PNPLA2 triglyceride hydrolase activity. Interacts with SERPINF1; this interaction stimulates the phospholipase A2 activity of PNPLA2. Despite a colocalization in lipid droplets, it probably does not interact with PLIN. Interacts with PLIN5; prevents interaction with ABHD5. Interacts with FAF2. In terms of processing, phosphorylation at Ser-404 by PKA is increased during fasting and moderate intensity exercise, and moderately increases lipolytic activity. Phosphorylation at Ser-404 is increased upon beta-adrenergic stimulation. Post-translationally, ubiquitinated by PEX2 in response to reactive oxygen species (ROS), leading to its degradation. Ubiquitination is stimulated by LDAH. Highest expression in adipose tissue. Also detected in heart, skeletal muscle, and portions of the gastrointestinal tract. Detected in normal retina and retinoblastoma cells. Detected in retinal pigment epithelium and, at lower intensity, in the inner segments of photoreceptors and in the ganglion cell layer of the neural retina (at protein level).

The protein localises to the lipid droplet. Its subcellular location is the cell membrane. It localises to the cytoplasm. The enzyme catalyses a triacylglycerol + H2O = a diacylglycerol + a fatty acid + H(+). It catalyses the reaction a triacylglycerol + H2O = a 1,2-diacylglycerol + a fatty acid + H(+). It carries out the reaction a triacylglycerol + H2O = a 1,3-diacylglycerol + a fatty acid + H(+). The catalysed reaction is a triacyl-sn-glycerol + H2O = a 1,3-diacyl-sn-glycerol + a fatty acid + H(+). The enzyme catalyses a triacyl-sn-glycerol + H2O = a 2,3-diacyl-sn-glycerol + a fatty acid + H(+). It catalyses the reaction a 1-acylglycerol + a 1,3-diacylglycerol = a triacylglycerol + glycerol. It carries out the reaction a 1-acylglycerol + a 1,2-diacylglycerol = a triacylglycerol + glycerol. The catalysed reaction is 2 a 1-acylglycerol = a 1,2-diacylglycerol + glycerol. The enzyme catalyses a triacylglycerol + all-trans-retinol = an all-trans-retinyl ester + a diacylglycerol. It catalyses the reaction 1,2-di-(9Z-octadecenoyl)-glycerol + (9Z)-octadecenoate + H(+) = 1,2,3-tri-(9Z-octadecenoyl)-glycerol + H2O. It carries out the reaction 1,2,3-tri-(9Z-octadecenoyl)-glycerol + H2O = 1,3-di-(9Z-octadecenoyl)-glycerol + (9Z)-octadecenoate + H(+). The catalysed reaction is 1-(9Z-octadecenoyl)-glycerol + 1,3-di-(9Z-octadecenoyl)-glycerol = 1,2,3-tri-(9Z-octadecenoyl)-glycerol + glycerol. The enzyme catalyses 1-(9Z-octadecenoyl)-glycerol + 1,2-di-(9Z-octadecenoyl)-glycerol = 1,2,3-tri-(9Z-octadecenoyl)-glycerol + glycerol. It catalyses the reaction 2 1-(9Z-octadecenoyl)-glycerol = 1,2-di-(9Z-octadecenoyl)-glycerol + glycerol. It carries out the reaction 1,2,3-tri-(9Z-octadecenoyl)-glycerol + all-trans-retinol = all-trans-retinyl 9Z-octadecenoate + di-(9Z)-octadecenoylglycerol. The catalysed reaction is 1,2,3-tri-(9Z)-hexadecenoylglycerol + H2O = 1,3-di-(9Z)-hexadecenoylglycerol + (9Z)-hexadecenoate + H(+). The enzyme catalyses 1,2,3-tri-(9Z,12Z)-octadecadienoylglycerol + H2O = 1,3-di-(9Z,12Z)-octadecadienoylglycerol + (9Z,12Z)-octadecadienoate + H(+). It catalyses the reaction 1,2,3-tri-(9Z,12Z,15Z)-octadecatrienoylglycerol + H2O = 1,3-di-(9Z,12Z,15Z)-octadecatrienoylglycerol + (9Z,12Z,15Z)-octadecatrienoate + H(+). It carries out the reaction 1,3-di-(9Z)-octadecenoyl-2-hexadecanoylglycerol + H2O = 1,3-di-(9Z-octadecenoyl)-glycerol + hexadecanoate + H(+). The catalysed reaction is 1,2-di-(9Z)-octadecenoyl-3-hexadecanoyl-sn-glycerol + H2O = 1-(9Z)-octadecenoyl-3-hexadecanoyl-sn-glycerol + (9Z)-octadecenoate + H(+). The enzyme catalyses 1-hexadecanoyl-2,3-di-(9Z)-octadecenoyl-sn-glycerol + H2O = 1-hexadecanoyl-3-(9Z)-octadecenoyl-sn-glycerol + (9Z)-octadecenoate + H(+). It catalyses the reaction 1,2,3-tri-(9Z-octadecenoyl)-glycerol + H2O = 2,3-di-(9Z)-octadecenoyl-sn-glycerol + (9Z)-octadecenoate + H(+). It carries out the reaction 1,2,3-tri-(9Z)-hexadecenoylglycerol + H2O = 2,3-di-(9Z)-hexadecenoyl-sn-glycerol + (9Z)-hexadecenoate + H(+). The catalysed reaction is 1,2,3-tri-(9Z,12Z)-octadecadienoylglycerol + H2O = 2,3-di-(9Z,12Z)-octadecadienoyl-sn-glycerol + (9Z,12Z)-octadecadienoate + H(+). The enzyme catalyses 1,2,3-tri-(9Z,12Z,15Z)-octadecatrienoylglycerol + H2O = 2,3-di-(9Z,12Z,15Z)-octadecatrienoyl-sn-glycerol + (9Z,12Z,15Z)-octadecatrienoate + H(+). It catalyses the reaction 1,3-di-(9Z)-octadecenoyl-2-hexadecanoylglycerol + H2O = 2-hexadecanoyl-3-(9Z)-octadecenoyl-sn-glycerol + (9Z)-octadecenoate + H(+). It carries out the reaction 1-hexadecanoyl-2,3-di-(9Z)-octadecenoyl-sn-glycerol + H2O = 2,3-di-(9Z)-octadecenoyl-sn-glycerol + hexadecanoate + H(+). The catalysed reaction is 1,2-di-(9Z)-octadecenoyl-3-hexadecanoyl-sn-glycerol + H2O = 2-(9Z-octadecenoyl)-3-hexadecanoyl-sn-glycerol + (9Z)-octadecenoate + H(+). The enzyme catalyses a 1,2-diacyl-sn-glycero-3-phosphocholine + H2O = a 1-acyl-sn-glycero-3-phosphocholine + a fatty acid + H(+). It catalyses the reaction 1,2,3-tri-(9Z-octadecenoyl)-glycerol + 9-hydroxy-octadecanoate = 9-(9Z-octadecenoyloxy)-octadecanoate + 2,3-di-(9Z)-octadecenoyl-sn-glycerol. It carries out the reaction 1-hexadecanoyl-2,3-di-(9Z)-octadecenoyl-sn-glycerol + 9-hydroxy-octadecanoate = 9-hexadecanoyloxy-octadecanoate + 2,3-di-(9Z)-octadecenoyl-sn-glycerol. The catalysed reaction is 1,2,3-tri-(10Z)-heptadecenoylglycerol + 9-hydroxy-octadecanoate = 2,3-di-(10Z-heptadecenoyl)-sn-glycerol + 9-(10Z-heptadecenoyloxy)-octadecanoate. The enzyme catalyses 1,2,3-tri-(9Z,12Z)-octadecadienoylglycerol + 9-hydroxy-octadecanoate = 2,3-di-(9Z,12Z)-octadecadienoyl-sn-glycerol + 9-(9Z,12Z-octadecadienoyloxy)-octadecanoate. It catalyses the reaction 1,2,3-tri-(9Z)-hexadecenoylglycerol + 9-hydroxy-octadecanoate = 2,3-di-(9Z)-hexadecenoyl-sn-glycerol + 9-(9Z-hexadecenoyloxy)-octadecanoate. It carries out the reaction 9-hydroxy-octadecanoate + 1,2-di-(9Z-octadecenoyl)-sn-glycerol = 9-(9Z-octadecenoyloxy)-octadecanoate + 2-(9Z-octadecenoyl)-glycerol. The catalysed reaction is 1-hexadecanoyl-2,3-di-(9Z)-octadecenoyl-sn-glycerol + 9-hydroxy-octadecanoate = 1-hexadecanoyl-3-(9Z)-octadecenoyl-sn-glycerol + 9-(9Z-octadecenoyloxy)-octadecanoate. Its pathway is glycerolipid metabolism; triacylglycerol degradation. Its activity is regulated as follows. The triglyceride lipase activity is inhibited by BEL ((E)-6-(bromomethylene)-3-(1-naphthalenyl)-2H-tetrahydropyran-2-one), a suicide substrate inhibitor. No differences in the acylglycerol transacylase was detected in the presence or absence of ATP. Its function is as follows. Catalyzes the initial step in triglyceride hydrolysis in adipocyte and non-adipocyte lipid droplets. Exhibits a strong preference for the hydrolysis of long-chain fatty acid esters at the sn-2 position of the glycerol backbone and acts coordinately with LIPE/HLS and DGAT2 within the lipolytic cascade. Also possesses acylglycerol transacylase and phospholipase A2 activities. Transfers fatty acid from triglyceride to retinol, hydrolyzes retinylesters, and generates 1,3-diacylglycerol from triglycerides. Regulates adiposome size and may be involved in the degradation of adiposomes. Catalyzes the formation of an ester bond between hydroxy fatty acids and fatty acids derived from triglycerides or diglycerides to generate fatty acid esters of hydroxy fatty acids (FAHFAs) in adipocytes. Acts antagonistically with LDAH in regulation of cellular lipid stores. Inhibits LDAH-stimulated lipid droplet fusion. May play an important role in energy homeostasis. May play a role in the response of the organism to starvation, enhancing hydrolysis of triglycerides and providing free fatty acids to other tissues to be oxidized in situations of energy depletion. This Homo sapiens (Human) protein is Patatin-like phospholipase domain-containing protein 2.